We begin with the raw amino-acid sequence, 98 residues long: Integration host factor subunit beta (98 aa).

This sequence belongs to the bacterial histone-like protein family. As to quaternary structure, heterodimer of an alpha and a beta chain.

In terms of biological role, this protein is one of the two subunits of integration host factor, a specific DNA-binding protein that functions in genetic recombination as well as in transcriptional and translational control. The polypeptide is Integration host factor subunit beta (Pseudomonas fluorescens (strain Pf0-1)).